A 311-amino-acid chain; its full sequence is Porphobilinogen deaminase (311 aa).

Position 240 is an S-(dipyrrolylmethanemethyl)cysteine (cysteine 240).

Belongs to the HMBS family. As to quaternary structure, monomer. It depends on dipyrromethane as a cofactor.

It catalyses the reaction 4 porphobilinogen + H2O = hydroxymethylbilane + 4 NH4(+). Its pathway is porphyrin-containing compound metabolism; protoporphyrin-IX biosynthesis; coproporphyrinogen-III from 5-aminolevulinate: step 2/4. Its function is as follows. Tetrapolymerization of the monopyrrole PBG into the hydroxymethylbilane pre-uroporphyrinogen in several discrete steps. This chain is Porphobilinogen deaminase, found in Natranaerobius thermophilus (strain ATCC BAA-1301 / DSM 18059 / JW/NM-WN-LF).